Reading from the N-terminus, the 205-residue chain is Urease accessory protein UreG (205 aa).

10-17 serves as a coordination point for GTP; it reads GPVGAGKT.

This sequence belongs to the SIMIBI class G3E GTPase family. UreG subfamily. In terms of assembly, homodimer. UreD, UreF and UreG form a complex that acts as a GTP-hydrolysis-dependent molecular chaperone, activating the urease apoprotein by helping to assemble the nickel containing metallocenter of UreC. The UreE protein probably delivers the nickel.

Its subcellular location is the cytoplasm. Functionally, facilitates the functional incorporation of the urease nickel metallocenter. This process requires GTP hydrolysis, probably effectuated by UreG. The polypeptide is Urease accessory protein UreG (Corynebacterium glutamicum (strain ATCC 13032 / DSM 20300 / JCM 1318 / BCRC 11384 / CCUG 27702 / LMG 3730 / NBRC 12168 / NCIMB 10025 / NRRL B-2784 / 534)).